Here is a 513-residue protein sequence, read N- to C-terminus: ATP synthase subunit alpha (513 aa).

169 to 176 (GDRQIGKT) is a binding site for ATP.

This sequence belongs to the ATPase alpha/beta chains family. As to quaternary structure, F-type ATPases have 2 components, CF(1) - the catalytic core - and CF(0) - the membrane proton channel. CF(1) has five subunits: alpha(3), beta(3), gamma(1), delta(1), epsilon(1). CF(0) has three main subunits: a(1), b(2) and c(9-12). The alpha and beta chains form an alternating ring which encloses part of the gamma chain. CF(1) is attached to CF(0) by a central stalk formed by the gamma and epsilon chains, while a peripheral stalk is formed by the delta and b chains.

The protein localises to the cell inner membrane. The enzyme catalyses ATP + H2O + 4 H(+)(in) = ADP + phosphate + 5 H(+)(out). In terms of biological role, produces ATP from ADP in the presence of a proton gradient across the membrane. The alpha chain is a regulatory subunit. The polypeptide is ATP synthase subunit alpha (Shewanella woodyi (strain ATCC 51908 / MS32)).